The sequence spans 249 residues: Triosephosphate isomerase (249 aa).

Residue Asn9–Lys11 coordinates substrate. His94 serves as the catalytic Electrophile. Catalysis depends on Glu166, which acts as the Proton acceptor. Residues Gly172 and Gly232–Gly233 each bind substrate.

It belongs to the triosephosphate isomerase family. Homodimer.

The protein resides in the cytoplasm. It catalyses the reaction D-glyceraldehyde 3-phosphate = dihydroxyacetone phosphate. It functions in the pathway carbohydrate biosynthesis; gluconeogenesis. Its pathway is carbohydrate degradation; glycolysis; D-glyceraldehyde 3-phosphate from glycerone phosphate: step 1/1. In terms of biological role, involved in the gluconeogenesis. Catalyzes stereospecifically the conversion of dihydroxyacetone phosphate (DHAP) to D-glyceraldehyde-3-phosphate (G3P). This is Triosephosphate isomerase from Xylella fastidiosa (strain 9a5c).